The following is a 241-amino-acid chain: Ribose-5-phosphate isomerase A (241 aa).

Residues 29-32, 84-87, and 97-100 contribute to the substrate site; these read TGTT, DGAD, and KGGG. The active-site Proton acceptor is the glutamate 106. Substrate is bound at residue lysine 124.

The protein belongs to the ribose 5-phosphate isomerase family. In terms of assembly, homodimer.

The catalysed reaction is aldehydo-D-ribose 5-phosphate = D-ribulose 5-phosphate. The protein operates within carbohydrate degradation; pentose phosphate pathway; D-ribose 5-phosphate from D-ribulose 5-phosphate (non-oxidative stage): step 1/1. Functionally, catalyzes the reversible conversion of ribose-5-phosphate to ribulose 5-phosphate. This is Ribose-5-phosphate isomerase A from Thermoplasma volcanium (strain ATCC 51530 / DSM 4299 / JCM 9571 / NBRC 15438 / GSS1).